The chain runs to 212 residues: Redox-sensing transcriptional repressor Rex (212 aa).

The H-T-H motif DNA-binding region spans Leu-18–Phe-57. An NAD(+)-binding site is contributed by Gly-92 to Gly-97.

It belongs to the transcriptional regulatory Rex family. Homodimer.

The protein localises to the cytoplasm. Modulates transcription in response to changes in cellular NADH/NAD(+) redox state. The chain is Redox-sensing transcriptional repressor Rex from Staphylococcus haemolyticus (strain JCSC1435).